We begin with the raw amino-acid sequence, 836 residues long: Transcription factor vrtR2 (836 aa).

Residues 1 to 26 (MPSLSSKTSTMQRSCRPQMSACPNQQ) show a composition bias toward polar residues. Positions 1–29 (MPSLSSKTSTMQRSCRPQMSACPNQQQKD) are disordered. A DNA-binding region (zn(2)-C6 fungal-type) is located at residues 37–63 (CVLCRDRKLKCDKLDPCSNCTSSGVAC). The disordered stretch occupies residues 72–114 (PRGRHARTVQTKASTPPDTRRRGSSNESTTAPAPDDGGLGTHI). Residues 79–88 (TVQTKASTPP) show a composition bias toward polar residues.

The protein resides in the nucleus. Its function is as follows. Probable transcription factor that regulates expression of the gene cluster that mediates the biosynthesis of viridicatumtoxin, a tetracycline-like fungal meroterpenoid with a unique, fused spirobicyclic ring system. This chain is Transcription factor vrtR2, found in Penicillium aethiopicum.